The sequence spans 337 residues: UbiA prenyltransferase domain-containing protein 1 (337 aa).

Ala2 carries the N-acetylalanine modification. Helical transmembrane passes span 82-102, 133-153, 159-179, 187-207, 208-228, 244-266, 276-296, and 314-334; these read LLVG…LVNT, FGVF…CLSP, LALI…GIGF, LVIL…VQVG, SLAV…EAVL, IVTL…LLFL, THCS…FSLE, and LNLL…AGSL.

This sequence belongs to the UbiA prenyltransferase family. In terms of assembly, interacts with HMGCR and SOAT1.

The protein localises to the endoplasmic reticulum membrane. It is found in the golgi apparatus membrane. Its subcellular location is the mitochondrion membrane. It catalyses the reaction menadiol + (2E,6E,10E)-geranylgeranyl diphosphate = menaquinol-4 + diphosphate. It carries out the reaction all-trans-decaprenyl diphosphate + 4-hydroxybenzoate = 4-hydroxy-3-(all-trans-decaprenyl)benzoate + diphosphate. It functions in the pathway quinol/quinone metabolism; menaquinone biosynthesis. The protein operates within cofactor biosynthesis; ubiquinone biosynthesis. Its function is as follows. Prenyltransferase that mediates the formation of menaquinone-4 (MK-4) and coenzyme Q10. MK-4 is a vitamin K2 isoform required for endothelial cell development. Mediates the conversion of phylloquinone (PK) into MK-4, probably by cleaving the side chain of phylloquinone (PK) to release 2-methyl-1,4-naphthoquinone (menadione; K3) and then prenylating it with geranylgeranyl pyrophosphate (GGPP) to form MK-4. Also plays a role in cardiovascular development independently of MK-4 biosynthesis, by acting as a coenzyme Q10 biosynthetic enzyme: coenzyme Q10, also named ubiquinone, plays an important antioxidant role in the cardiovascular system. Mediates biosynthesis of coenzyme Q10 in the Golgi membrane, leading to protect cardiovascular tissues from NOS3/eNOS-dependent oxidative stress. The polypeptide is UbiA prenyltransferase domain-containing protein 1 (UBIAD1) (Ailuropoda melanoleuca (Giant panda)).